We begin with the raw amino-acid sequence, 1619 residues long: ATP-dependent helicase ULS1 (1619 aa).

An SUMO interacting motif; type a 1 motif is present at residues Ile7–Thr10. Polar residues predominate over residues Ser86–Val102. Disordered regions lie at residues Ser86–Ser123, Asn200–Ser279, Pro347–Ile371, and Ser429–Gln450. Residues Leu103–Gln118 show a composition bias toward basic and acidic residues. Phosphoserine is present on Ser121. Residues Asn200–Asp210 are compositionally biased toward polar residues. Residues Pro211 to Ile226 are compositionally biased toward basic and acidic residues. 2 stretches are compositionally biased toward polar residues: residues Ser242 to Asn259 and Leu269 to Ser279. Positions Asn353–Gln366 are enriched in basic and acidic residues. The SUMO interacting motif; type b 1 motif lies at Ile371–Asp378. Residues Leu470–Leu473 carry the SUMO interacting motif; type a 2 motif. Positions Ile543–Asn550 match the SUMO interacting motif; type b 2 motif. The 202-residue stretch at Gln956–Pro1157 folds into the Helicase ATP-binding domain. An ATP-binding site is contributed by Asp969–Thr976. An RING-type zinc finger spans residues Cys1330 to Gln1386. In terms of domain architecture, Helicase C-terminal spans Gln1447–Gly1606.

This sequence belongs to the SNF2/RAD54 helicase family. As to quaternary structure, interacts with CDC3, CDC11, EBP2, SIR4, UBC4 and SUMO/SMT3.

The protein resides in the nucleus. In terms of biological role, ATP-dependent helicase involved mating type switching and in silencing interference through its interaction with the silencing regulator SIR4. Cooperates with UBC4 and UBC5 to mediate ubiquitination of SUMO conjugates. This chain is ATP-dependent helicase ULS1 (ULS1), found in Saccharomyces cerevisiae (strain ATCC 204508 / S288c) (Baker's yeast).